The following is an 85-amino-acid chain: Large ribosomal subunit protein bL27 (85 aa).

Belongs to the bacterial ribosomal protein bL27 family.

The polypeptide is Large ribosomal subunit protein bL27 (Campylobacter concisus (strain 13826)).